The primary structure comprises 218 residues: Large ribosomal subunit protein eL14 (218 aa).

Lys79 carries the post-translational modification N6-acetyllysine. An N6-acetyllysine; alternate modification is found at Lys85. The residue at position 85 (Lys85) is an N6-succinyllysine; alternate. Residue Lys124 forms a Glycyl lysine isopeptide (Lys-Gly) (interchain with G-Cter in SUMO2) linkage. Ser139 carries the post-translational modification Phosphoserine. Residues 159 to 218 (VPAKKATAAGKKAAAQKAPAQKAPAQKAAGQKAAQPPKAQKGQKPPAQKAPAPKASGKKA) form a disordered region. Tandem repeats lie at residues 174-178 (QKAPA), 179-183 (QKAPA), 184-188 (QKAAG), 189-193 (QKAAQ), 196-198 (KAQ), and 199-201 (KGQ). Residues 174–193 (QKAPAQKAPAQKAAGQKAAQ) form a 4 X 5 AA tandem repeats of Q-K-A-[PAS]-X region. Residues 196-201 (KAQKGQ) are 2 X 3 AA tandem repeats of K-[GA]-Q. Lys207 bears the N6-succinyllysine mark.

Belongs to the eukaryotic ribosomal protein eL14 family. Component of the large ribosomal subunit.

The protein resides in the cytoplasm. Functionally, component of the large ribosomal subunit. The ribosome is a large ribonucleoprotein complex responsible for the synthesis of proteins in the cell. In Oryctolagus cuniculus (Rabbit), this protein is Large ribosomal subunit protein eL14 (RPL14).